The primary structure comprises 148 residues: Sperm-specific protein PHI-2B (148 aa).

Basic residues predominate over residues 1–35 (PSPSRRSRSRSRSRSKSPKRSPAKKARKTPKKRRA). Disordered regions lie at residues 1–44 (PSPS…KPST) and 97–148 (GVLV…KSNN). Residues 40 to 119 (KKPSTLSMIV…GATGSFRVGK (80 aa)) form the H15 domain. Over residues 124–148 (PKKKAKKAKSPKKKSSKKSSNKSNN) the composition is skewed to basic residues.

This sequence belongs to the histone H1/H5 family. As to expression, sperm.

The protein localises to the nucleus. Its subcellular location is the chromosome. Functionally, linker histones are implicated in chromatin remodeling and/or transcriptional regulation during spermiogenesis, the process of spermatid maturation into spermatozoa. In Mytilus californianus (California mussel), this protein is Sperm-specific protein PHI-2B.